Here is an 84-residue protein sequence, read N- to C-terminus: uncharacterized protein (84 aa).

The tract at residues 62-84 (GYATKKDTMRMSAQKRTTKRLKP) is disordered.

This is an uncharacterized protein from Soybean chlorotic mottle virus.